We begin with the raw amino-acid sequence, 251 residues long: tRNA (guanine-N(7)-)-methyltransferase (251 aa).

Positions 69, 94, 121, and 143 each coordinate S-adenosyl-L-methionine. D143 is a catalytic residue. The substrate site is built by K147 and D179.

This sequence belongs to the class I-like SAM-binding methyltransferase superfamily. TrmB family.

The enzyme catalyses guanosine(46) in tRNA + S-adenosyl-L-methionine = N(7)-methylguanosine(46) in tRNA + S-adenosyl-L-homocysteine. Its pathway is tRNA modification; N(7)-methylguanine-tRNA biosynthesis. Its function is as follows. Catalyzes the formation of N(7)-methylguanine at position 46 (m7G46) in tRNA. This Rhodopseudomonas palustris (strain BisB18) protein is tRNA (guanine-N(7)-)-methyltransferase.